The sequence spans 436 residues: GTPase Der (436 aa).

2 EngA-type G domains span residues Pro-3–Ser-168 and Ile-177–Ser-352. Residues Gly-9–Ser-16, Asp-56–Tyr-60, Asn-120–Glu-123, Gly-183–Ser-190, Asp-230–Leu-234, and Asn-295–Asp-298 each bind GTP. The KH-like domain occupies Gln-353–Lys-436.

It belongs to the TRAFAC class TrmE-Era-EngA-EngB-Septin-like GTPase superfamily. EngA (Der) GTPase family. As to quaternary structure, associates with the 50S ribosomal subunit.

In terms of biological role, GTPase that plays an essential role in the late steps of ribosome biogenesis. The protein is GTPase Der of Prosthecochloris aestuarii (strain DSM 271 / SK 413).